Reading from the N-terminus, the 596-residue chain is Transcription factor COE3 (596 aa).

The segment at 1–22 is disordered; that stretch reads MFGIQENIPRGGTTMKEEPLGS. Residues 63 to 66 are interaction with DNA; that stretch reads RKSN. The C5-type zinc finger occupies 151-170; it reads CRVLLTHEIMCSRCCDKKSC. Interaction with DNA stretches follow at residues 197-204 and 236-239; these read NCLKNAGN and NNSK. In terms of domain architecture, IPT/TIG spans 263 to 346; the sequence is PCIKAISPSE…KGAPGRFVYT (84 aa). Positions 451–483 are disordered; it reads TSQANDQVGYSRNTSSVSPRGYVPSSTPQQSNY.

It belongs to the COE family. In terms of assembly, forms either a homodimer or a heterodimer with a related family member. In terms of tissue distribution, expressed in brain.

The protein resides in the nucleus. Its function is as follows. Transcriptional activator. Recognizes variations of the palindromic sequence 5'-ATTCCCNNGGGAATT-3'. The sequence is that of Transcription factor COE3 (EBF3) from Homo sapiens (Human).